The sequence spans 497 residues: Signal recognition particle subunit SRP54 2 (497 aa).

A G-domain region spans residues 1–295 (MVLAQLGGSI…DVKPFVSRLL (295 aa)). GTP-binding positions include 108-115 (GLQGSGKT), 190-194 (DTSGR), and 248-251 (TKLD). Residues 296–497 (GMGDLSGLMD…MLGGMGLGGD (202 aa)) are M-domain.

The protein belongs to the GTP-binding SRP family. SRP54 subfamily. In terms of assembly, component of a signal recognition particle (SRP) complex that consists of a 7SL RNA molecule of 300 nucleotides and six protein subunits: SRP72, SRP68, SRP54, SRP19, SRP14 and SRP9.

The protein resides in the cytoplasm. It localises to the endoplasmic reticulum. The enzyme catalyses GTP + H2O = GDP + phosphate + H(+). Component of the signal recognition particle (SRP) complex, a ribonucleoprotein complex that mediates the cotranslational targeting of secretory and membrane proteins to the endoplasmic reticulum (ER). As part of the SRP complex, associates with the SRP receptor (SR) component SRPRA to target secretory proteins to the endoplasmic reticulum membrane. Binds to the signal sequence of presecretory proteins when they emerge from the ribosomes. Displays basal GTPase activity, and stimulates reciprocal GTPase activation of the SR subunit SRPRA. Forms a guanosine 5'-triphosphate (GTP)-dependent complex with the SR subunit SRPRA. SR compaction and GTPase mediated rearrangement of SR drive SRP-mediated cotranslational protein translocation into the ER. Requires the presence of SRP9/SRP14 and/or SRP19 to stably interact with RNA. This Hordeum vulgare (Barley) protein is Signal recognition particle subunit SRP54 2 (SRP54-2).